The primary structure comprises 252 residues: tRNA pseudouridine synthase A (252 aa).

The active-site Nucleophile is Asp-52. Tyr-110 lines the substrate pocket.

Belongs to the tRNA pseudouridine synthase TruA family. As to quaternary structure, homodimer.

It catalyses the reaction uridine(38/39/40) in tRNA = pseudouridine(38/39/40) in tRNA. Formation of pseudouridine at positions 38, 39 and 40 in the anticodon stem and loop of transfer RNAs. The protein is tRNA pseudouridine synthase A of Blochmanniella floridana.